The following is a 557-amino-acid chain: Formate--tetrahydrofolate ligase 1 (557 aa).

66–73 (TPAGEGKT) lines the ATP pocket.

This sequence belongs to the formate--tetrahydrofolate ligase family.

The catalysed reaction is (6S)-5,6,7,8-tetrahydrofolate + formate + ATP = (6R)-10-formyltetrahydrofolate + ADP + phosphate. The protein operates within one-carbon metabolism; tetrahydrofolate interconversion. This is Formate--tetrahydrofolate ligase 1 from Streptococcus sanguinis (strain SK36).